The following is a 144-amino-acid chain: Bacilliredoxin BCE_2233 (144 aa).

This sequence belongs to the bacilliredoxin family.

In Bacillus cereus (strain ATCC 10987 / NRS 248), this protein is Bacilliredoxin BCE_2233.